The following is a 317-amino-acid chain: MAPSSSSGLTFKLHPLVMLNISDHFTRVKTQLNPPAASCATGNGSNNADAMLLQNPRVYGCVIGLQRGRTVEIFNSFELIFDPALDTLDRSFLEKKQELYKKVFPDFYVLGWYSTGSDATESDMHIHKALMDINESPVYVLLNPAINHAQKDLPVTIYESEFHVIDGIPQSIFVHTSYTIETVEAERISVDHVAHLKPSDGGSAATQLAAHLTGIHSAIKMLNSRIRVLYQHIVAMQKGDKPCENSVLRQVSSLLRSLPAAESEKFNENFLMEYNDKLLMSYLAMITNCTSNMNEVVDKFNTAYDKHSRRGGRTAFM.

The 154-residue stretch at 11–164 (FKLHPLVMLN…VTIYESEFHV (154 aa)) folds into the MPN domain.

It belongs to the peptidase M67A family. CSN6 subfamily. As to quaternary structure, component of the CSN complex, probably composed of CSN1, CSN2, CSN3, CSN4, CSN5 (CSN5A or CSN5B), CSN6 (CSN6A or CSN6B), CSN7 and CSN8. Interacts with itself. In the complex, it probably interacts directly with CSN4, CSN5A or CSN5B, and CSN7. Binds to the translation initiation factors TIF3E1.

Its subcellular location is the cytoplasm. The protein resides in the nucleus. Its function is as follows. Component of the COP9 signalosome complex (CSN), a complex involved in various cellular and developmental processes such as photomorphogenesis and auxin and jasmonate responses. The CSN complex is an essential regulator of the ubiquitin (Ubl) conjugation pathway by mediating the deneddylation of the cullin subunits of SCF-type E3 ligase complexes, leading to decrease the Ubl ligase activity of SCF. It is involved in repression of photomorphogenesis in darkness by regulating the activity of COP1-containing Ubl ligase complexes. The complex is also required for degradation of PSIAA6 by regulating the activity of the Ubl ligase SCF-TIR complex. Essential for the structural integrity of the CSN holocomplex. The chain is COP9 signalosome complex subunit 6b from Arabidopsis thaliana (Mouse-ear cress).